The primary structure comprises 99 residues: DNA-directed RNA polymerase subunit Rpo11 (99 aa).

Belongs to the archaeal Rpo11/eukaryotic RPB11/RPC19 RNA polymerase subunit family. In terms of assembly, part of the RNA polymerase complex.

It localises to the cytoplasm. The catalysed reaction is RNA(n) + a ribonucleoside 5'-triphosphate = RNA(n+1) + diphosphate. Functionally, DNA-dependent RNA polymerase (RNAP) catalyzes the transcription of DNA into RNA using the four ribonucleoside triphosphates as substrates. The protein is DNA-directed RNA polymerase subunit Rpo11 of Aeropyrum pernix (strain ATCC 700893 / DSM 11879 / JCM 9820 / NBRC 100138 / K1).